A 591-amino-acid chain; its full sequence is 4-coumarate--CoA ligase-like 3 (591 aa).

Serine 228, serine 229, glycine 230, threonine 231, serine 232, and lysine 236 together coordinate ATP. Residue tyrosine 280 coordinates (E)-4-coumaroyl-AMP. Residue arginine 301 coordinates CoA. Residues 303 to 375 are SBD1; that stretch reads DAGDAVAAIG…QAFPHVDFIQ (73 aa). Positions 353, 375, 376, and 380 each coordinate (E)-4-coumaroyl-AMP. Residues glutamine 375, glycine 376, threonine 380, aspartate 459, and arginine 474 each coordinate ATP. Residues 376–440 are SBD2; the sequence is GYGMTESTAV…LHGPGIMKGY (65 aa). (E)-4-coumaroyl-AMP contacts are provided by lysine 476 and lysine 480. CoA is bound by residues lysine 482 and glycine 483. Lysine 565 serves as a coordination point for ATP.

This sequence belongs to the ATP-dependent AMP-binding enzyme family. The cofactor is Mg(2+).

The catalysed reaction is (E)-4-coumarate + ATP + CoA = (E)-4-coumaroyl-CoA + AMP + diphosphate. The enzyme catalyses (E)-4-coumarate + ATP + H(+) = (E)-4-coumaroyl-AMP + diphosphate. It catalyses the reaction (E)-4-coumaroyl-AMP + CoA = (E)-4-coumaroyl-CoA + AMP + H(+). Functionally, carboxylate--CoA ligase that may use 4-coumarate as substrate. Follows a two-step reaction mechanism, wherein the carboxylate substrate first undergoes adenylation by ATP, followed by a thioesterification in the presence of CoA to yield the final CoA thioester. The chain is 4-coumarate--CoA ligase-like 3 (4CLL3) from Oryza sativa subsp. japonica (Rice).